The following is a 309-amino-acid chain: Genome polyprotein (309 aa).

Topologically, residues 1–40 are cytoplasmic; the sequence is GFADLMGYIPLVGAPLGGAARALAHGVRVLEDGVNYATGN. Residues 36–39 are important for lipid droplets localization; it reads YATG. A helical membrane pass occupies residues 41–61; the sequence is LPGCSFSIFLLALLSCLTVPA. The propeptide at 50–63 is ER anchor for the core protein, removed in mature form by host signal peptidase; it reads LLALLSCLTVPASA. Over 62–230 the chain is Lumenal; the sequence is SAYQVRNSSG…AGAHWGVLAG (169 aa). N-linked (GlcNAc...) asparagine; by host glycans are attached at residues asparagine 68, asparagine 81, and asparagine 106. An important for fusion region spans residues 137–168; the sequence is LVGSATLCSALYVGDLCGSVFLVGQLFTFSPR. The N-linked (GlcNAc...) asparagine; by host glycan is linked to asparagine 177. A helical membrane pass occupies residues 231–251; it reads IAYFSMVGNWAKVLVVLLLFA. The Lumenal portion of the chain corresponds to 252–309; it reads GVDATTYTTGGNAARTTQALTSFFSPGAKQDIQLINTNGSWHINRTALNCNASLDTGW. The HVR1 stretch occupies residues 256 to 282; sequence TTYTTGGNAARTTQALTSFFSPGAKQD. N-linked (GlcNAc...) (high mannose) asparagine; by host glycosylation is found at asparagine 289, asparagine 295, and asparagine 302.

It belongs to the hepacivirus polyprotein family. Homooligomer. Interacts with E1 (via C-terminus). Interacts with the non-structural protein 5A. Interacts (via N-terminus) with host STAT1 (via SH2 domain); this interaction results in decreased STAT1 phosphorylation and ubiquitin-mediated proteasome-dependent STAT1 degradation, leading to decreased IFN-stimulated gene transcription. Interacts with host STAT3; this interaction constitutively activates STAT3. Interacts with host LTBR receptor. Interacts with host TNFRSF1A receptor and possibly induces apoptosis. Interacts with host HNRPK. Interacts with host YWHAE. Interacts with host UBE3A/E6AP. Interacts with host DDX3X. Interacts with host APOA2. Interacts with host RXRA protein. Interacts with host SP110 isoform 3/Sp110b; this interaction sequesters the transcriptional corepressor SP110 away from the nucleus. Interacts with host CREB3 nuclear transcription protein; this interaction triggers cell transformation. Interacts with host ACY3. Interacts with host C1QR1. Interacts with host RBM24; this interaction, which enhances the interaction of the mature core protein with 5'-UTR, may inhibit viral translation and favor replication. Interacts with host EIF2AK2/PKR; this interaction induces the autophosphorylation of EIF2AK2. Part of the viral assembly initiation complex composed of NS2, E1, E2, NS3, NS4A, NS5A and the mature core protein. In terms of assembly, forms a heterodimer with envelope glycoprotein E2. Interacts with mature core protein. Interacts with protease NS2. The heterodimer E1/E2 interacts with host CLDN1; this interaction plays a role in viral entry into host cell. Interacts with host SPSB2 (via C-terminus). Part of the viral assembly initiation complex composed of NS2, E1, E2, NS3, NS4A, NS5A and the mature core protein. As to quaternary structure, forms a heterodimer with envelope glycoprotein E1. Interacts with host CD81 and SCARB1 receptors; these interactions play a role in viral entry into host cell. Interacts with host EIF2AK2/PKR; this interaction inhibits EIF2AK2 and probably allows the virus to evade the innate immune response. Interacts with host CD209/DC-SIGN and CLEC4M/DC-SIGNR. Interact with host SPCS1; this interaction is essential for viral particle assembly. Interacts with protease NS2. The heterodimer E1/E2 interacts with host CLDN1; this interaction plays a role in viral entry into host cell. Part of the viral assembly initiation complex composed of NS2, E1, E2, NS3, NS4A, NS5A and the mature core protein. Post-translationally, specific enzymatic cleavages in vivo yield mature proteins. The structural proteins, core, E1, E2 and p7 are produced by proteolytic processing by host signal peptidases. The core protein precursor is synthesized as a 23 kDa, which is retained in the ER membrane through the hydrophobic signal peptide. Cleavage by the signal peptidase releases the 21 kDa mature core protein. The cleavage of the core protein precursor occurs between aminoacids 176 and 188 but the exact cleavage site is not known. Some degraded forms of the core protein appear as well during the course of infection. The other proteins (p7, NS2, NS3, NS4A, NS4B, NS5A and NS5B) are cleaved by the viral proteases. Autoprocessing between NS2 and NS3 is mediated by the NS2 cysteine protease catalytic domain and regulated by the NS3 N-terminal domain. In terms of processing, phosphorylated by host PKC and PKA. Ubiquitinated; mediated by UBE3A and leading to core protein subsequent proteasomal degradation. Post-translationally, highly N-glycosylated.

It is found in the host endoplasmic reticulum membrane. It localises to the host mitochondrion membrane. The protein resides in the virion. The protein localises to the host cytoplasm. Its subcellular location is the host nucleus. It is found in the host lipid droplet. It localises to the virion membrane. Packages viral RNA to form a viral nucleocapsid, and promotes virion budding. Participates in the viral particle production as a result of its interaction with the non-structural protein 5A. Binds RNA and may function as a RNA chaperone to induce the RNA structural rearrangements taking place during virus replication. Modulates viral translation initiation by interacting with viral IRES and 40S ribosomal subunit. Affects various cell signaling pathways, host immunity and lipid metabolism. Prevents the establishment of cellular antiviral state by blocking the interferon-alpha/beta (IFN-alpha/beta) and IFN-gamma signaling pathways and by blocking the formation of phosphorylated STAT1 and promoting ubiquitin-mediated proteasome-dependent degradation of STAT1. Activates STAT3 leading to cellular transformation. Regulates the activity of cellular genes, including c-myc and c-fos. May repress the promoter of p53, and sequester CREB3 and SP110 isoform 3/Sp110b in the cytoplasm. Represses cell cycle negative regulating factor CDKN1A, thereby interrupting an important check point of normal cell cycle regulation. Targets transcription factors involved in the regulation of inflammatory responses and in the immune response: suppresses TNF-induced NF-kappa-B activation, and activates AP-1. Binds to dendritic cells (DCs) via C1QR1, resulting in down-regulation of T-lymphocytes proliferation. Alters lipid metabolism by interacting with hepatocellular proteins involved in lipid accumulation and storage. Induces up-regulation of FAS promoter activity, and thereby contributes to the increased triglyceride accumulation in hepatocytes (steatosis). Functionally, forms a heterodimer with envelope glycoprotein E2, which mediates virus attachment to the host cell, virion internalization through clathrin-dependent endocytosis and fusion with host membrane. Fusion with the host cell is most likely mediated by both E1 and E2, through conformational rearrangements of the heterodimer required for fusion rather than a classical class II fusion mechanism. E1/E2 heterodimer binds host apolipoproteins such as APOB and ApoE thereby forming a lipo-viro-particle (LVP). APOE associated to the LVP allows the initial virus attachment to cell surface receptors such as the heparan sulfate proteoglycans (HSPGs), syndecan-1 (SDC1), syndecan-1 (SDC2), the low-density lipoprotein receptor (LDLR) and scavenger receptor class B type I (SCARB1). The cholesterol transfer activity of SCARB1 allows E2 exposure and binding of E2 to SCARB1 and the tetraspanin CD81. E1/E2 heterodimer binding on CD81 activates the epithelial growth factor receptor (EGFR) signaling pathway. Diffusion of the complex E1-E2-EGFR-SCARB1-CD81 to the cell lateral membrane allows further interaction with Claudin 1 (CLDN1) and occludin (OCLN) to finally trigger HCV entry. Its function is as follows. Forms a heterodimer with envelope glycoprotein E1, which mediates virus attachment to the host cell, virion internalization through clathrin-dependent endocytosis and fusion with host membrane. Fusion with the host cell is most likely mediated by both E1 and E2, through conformational rearrangements of the heterodimer required for fusion rather than a classical class II fusion mechanism. The interaction between envelope glycoprotein E2 and host apolipoprotein E/APOE allows the proper assembly, maturation and infectivity of the viral particles. This interaction is probably promoted via the up-regulation of cellular autophagy by the virus. E1/E2 heterodimer binds host apolipoproteins such as APOB and APOE thereby forming a lipo-viro-particle (LVP). APOE associated to the LVP allows the initial virus attachment to cell surface receptors such as the heparan sulfate proteoglycans (HSPGs), syndecan-1 (SDC1), syndecan-1 (SDC2), the low-density lipoprotein receptor (LDLR) and scavenger receptor class B type I (SCARB1). The cholesterol transfer activity of SCARB1 allows E2 exposure and binding of E2 to SCARB1 and the tetraspanin CD81. E1/E2 heterodimer binding on CD81 activates the epithelial growth factor receptor (EGFR) signaling pathway. Diffusion of the complex E1-E2-EGFR-SCARB1-CD81 to the cell lateral membrane allows further interaction with Claudin 1 (CLDN1) and occludin (OCLN) to finally trigger HCV entry. Inhibits host EIF2AK2/PKR activation, preventing the establishment of an antiviral state. Viral ligand for CD209/DC-SIGN and CLEC4M/DC-SIGNR, which are respectively found on dendritic cells (DCs), and on liver sinusoidal endothelial cells and macrophage-like cells of lymph node sinuses. These interactions allow the capture of circulating HCV particles by these cells and subsequent facilitated transmission to permissive cells such as hepatocytes and lymphocyte subpopulations. The chain is Genome polyprotein from Hepatitis C virus (isolate HCT27) (HCV).